The primary structure comprises 629 residues: Aspartate--tRNA(Asp/Asn) ligase (629 aa).

The segment at 1–24 (MERSSRADLISEDSHPARTHTCGD) is disordered. The span at 12–24 (EDSHPARTHTCGD) shows a compositional bias: basic and acidic residues. Position 194 (Glu-194) interacts with L-aspartate. Residues 218-221 (QTYK) are aspartate. Arg-240 serves as a coordination point for L-aspartate. ATP contacts are provided by residues 240-242 (RDE) and Gln-249. His-474 serves as a coordination point for L-aspartate. Position 508 (Glu-508) interacts with ATP. L-aspartate is bound at residue Arg-515. Residue 560–563 (GLDR) participates in ATP binding.

Belongs to the class-II aminoacyl-tRNA synthetase family. Type 1 subfamily. In terms of assembly, homodimer.

It is found in the cytoplasm. The catalysed reaction is tRNA(Asx) + L-aspartate + ATP = L-aspartyl-tRNA(Asx) + AMP + diphosphate. In terms of biological role, aspartyl-tRNA synthetase with relaxed tRNA specificity since it is able to aspartylate not only its cognate tRNA(Asp) but also tRNA(Asn). Reaction proceeds in two steps: L-aspartate is first activated by ATP to form Asp-AMP and then transferred to the acceptor end of tRNA(Asp/Asn). This is Aspartate--tRNA(Asp/Asn) ligase from Salinibacter ruber (strain DSM 13855 / M31).